A 204-amino-acid polypeptide reads, in one-letter code: UPF0228 protein MA_0511 (204 aa).

It belongs to the UPF0228 family.

The protein is UPF0228 protein MA_0511 of Methanosarcina acetivorans (strain ATCC 35395 / DSM 2834 / JCM 12185 / C2A).